A 234-amino-acid polypeptide reads, in one-letter code: Small ribosomal subunit protein uS3 (234 aa).

The region spanning 39 to 107 is the KH type-2 domain; that stretch reads VRDYLKKKLS…PVHVNIEEVR (69 aa). Positions 212-234 are disordered; the sequence is EQPAAAEQEKRGKKSGVKHAAAS.

This sequence belongs to the universal ribosomal protein uS3 family. Part of the 30S ribosomal subunit. Forms a tight complex with proteins S10 and S14.

In terms of biological role, binds the lower part of the 30S subunit head. Binds mRNA in the 70S ribosome, positioning it for translation. The sequence is that of Small ribosomal subunit protein uS3 from Thiobacillus denitrificans (strain ATCC 25259 / T1).